The chain runs to 184 residues: Peptide deformylase (184 aa).

Residues cysteine 111 and histidine 154 each contribute to the Fe cation site. Glutamate 155 is a catalytic residue. Residue histidine 158 coordinates Fe cation.

It belongs to the polypeptide deformylase family. Requires Fe(2+) as cofactor.

The catalysed reaction is N-terminal N-formyl-L-methionyl-[peptide] + H2O = N-terminal L-methionyl-[peptide] + formate. Its function is as follows. Removes the formyl group from the N-terminal Met of newly synthesized proteins. Requires at least a dipeptide for an efficient rate of reaction. N-terminal L-methionine is a prerequisite for activity but the enzyme has broad specificity at other positions. This is Peptide deformylase from Lacticaseibacillus casei (strain BL23) (Lactobacillus casei).